A 375-amino-acid chain; its full sequence is Probable Na(+)/H(+) antiporter GerT (375 aa).

The next 10 helical transmembrane spans lie at 27–47, 89–109, 112–132, 145–165, 183–203, 204–224, 226–246, 261–281, 288–308, and 350–370; these read PSVLGKLIVGIIIGPAVLGII, AGGIIFPFIGGYVTGLLFGLI, HAIFLGLLLCATSVSITVQTL, TILGAAVFDDVIVVILLAFVM, IIFFVSIVFIAWKVVPWIMKM, LVPLRVTEALISAALIICFSF, YYSEMMGIAGIIGAFAAGIAI, PIAYAIFVPVFFVSIGMEITF, LWFIIIMTLIAIFTKLIGSGL, and ENFTAIVIVVILTTIITPPLL.

It belongs to the monovalent cation:proton antiporter 2 (CPA2) transporter (TC 2.A.37) family.

It localises to the membrane. Contributes to the success of spore outgrowth from the germinated state during alkaline or Na(+) stress. Does not have a significant role in germination. The polypeptide is Probable Na(+)/H(+) antiporter GerT (gerT) (Bacillus cereus).